Here is a 77-residue protein sequence, read N- to C-terminus: Sec-independent protein translocase protein TatA (77 aa).

Residues 1-21 (MGGLSIWHWLIVLLIVALVFG) form a helical membrane-spanning segment. The segment at 40–77 (KDGMREGEAPADPQQLPRSGSVNVDAKDATRSSDSNKA) is disordered. A compositionally biased stretch (basic and acidic residues) spans 64-77 (DAKDATRSSDSNKA).

It belongs to the TatA/E family. The Tat system comprises two distinct complexes: a TatABC complex, containing multiple copies of TatA, TatB and TatC subunits, and a separate TatA complex, containing only TatA subunits. Substrates initially bind to the TatABC complex, which probably triggers association of the separate TatA complex to form the active translocon.

It localises to the cell inner membrane. Its function is as follows. Part of the twin-arginine translocation (Tat) system that transports large folded proteins containing a characteristic twin-arginine motif in their signal peptide across membranes. TatA could form the protein-conducting channel of the Tat system. The protein is Sec-independent protein translocase protein TatA of Burkholderia thailandensis (strain ATCC 700388 / DSM 13276 / CCUG 48851 / CIP 106301 / E264).